A 337-amino-acid polypeptide reads, in one-letter code: DNA-directed RNA polymerase subunit alpha (337 aa).

The alpha N-terminal domain (alpha-NTD) stretch occupies residues 1–233 (MVREEVVGST…DLFIPFLHAE (233 aa)). Residues 265–337 (KEIALKCIFI…FAIDLPKNKF (73 aa)) form an alpha C-terminal domain (alpha-CTD) region.

The protein belongs to the RNA polymerase alpha chain family. In terms of assembly, in plastids the minimal PEP RNA polymerase catalytic core is composed of four subunits: alpha, beta, beta', and beta''. When a (nuclear-encoded) sigma factor is associated with the core the holoenzyme is formed, which can initiate transcription.

The protein resides in the plastid. Its subcellular location is the chloroplast. The enzyme catalyses RNA(n) + a ribonucleoside 5'-triphosphate = RNA(n+1) + diphosphate. DNA-dependent RNA polymerase catalyzes the transcription of DNA into RNA using the four ribonucleoside triphosphates as substrates. The polypeptide is DNA-directed RNA polymerase subunit alpha (Acorus gramineus (Dwarf sweet flag)).